We begin with the raw amino-acid sequence, 705 residues long: Dynein axonemal intermediate chain 1 (705 aa).

2 disordered regions span residues Met1–Pro44 and Ala122–Ala169. Phosphoserine is present on residues Ser124 and Ser127. Residues Ser124 to Thr135 show a composition bias toward polar residues. The segment covering Glu136–Ala159 has biased composition (acidic residues). 5 WD repeats span residues Ser386–Cys426, Lys435–Ile478, Ala543–Ile583, Asp585–Ile625, and Lys633–Pro672.

It belongs to the dynein intermediate chain family. As to quaternary structure, consists of at least two heavy chains and a number of intermediate and light chains. Interacts with BICD2. Interacts with CFAP45 and CFAP52. Interacts with CFAP53.

It is found in the cytoplasm. Its subcellular location is the cytoskeleton. The protein localises to the cilium axoneme. Functionally, part of the dynein complex of respiratory cilia. The sequence is that of Dynein axonemal intermediate chain 1 (Dnai1) from Rattus norvegicus (Rat).